The following is a 706-amino-acid chain: MQLLCVFCLVLLWEVGAASLSEVKLHLDIEGHASHYTIPWTELMAKVPGLSPEALWREANVTEDLASMLNRYKLIYKTSGTLGIALAEPVDIPAVSEGSMQVDASKVHPGVISGLNSPACMLSAPLEKQLFYYIGTMLPNTRPHSYVFYQLRCHLSYVALSINGDKFQYTGAMTSKFLMGTYKRVTEKGDEHVLSLIFGKTKDLPDLRGPFSYPSLTSAQSGDYSLVIVTTFVHYANFHNYFVPNLKDMFSRAVTMTAASYARYVLQKLVLLEMKGGCREPELDTETLTTMFEVSVAFFKVGHAVGETGNGCVDLRWLAKSFFELTVLKDIIGICYGATVKGMQSYGLERLAAVLMATVKMEELGHLTTEKQEYALRLATVGYPKAGVYSGLIGGATSVLLSAYNRHPLFQPLHTVMRETLFIGSHVVLRELRLNVTTQGPNLALYQLLSTALCSALEIGEVLRGLALGTESGLFSPCYLSLRFDLTRDKLLSMAPQEAMLDQAAVSNAVDGFLGRLSLEREDRDAWHLPAYKCVDRLDKVLMIIPLINVTFIISSDREVRGSALYEASTTYLSSSLFLSPVIMNKCSQGAVAGEPRQIPKIQNFTRTQKSCIFCGFALLSYDEKEGLETTTYITSQEVQNSILSSNYFDFDNLHVHYLLLTTNGTVMEIAGLYEERAHVVLAIILYFIAFALGIFLVHKIVMFFL.

An N-terminal signal peptide occupies residues 1 to 18 (MQLLCVFCLVLLWEVGAA). Residues 19 to 682 (SLSEVKLHLD…LYEERAHVVL (664 aa)) lie on the Virion surface side of the membrane. Asn-60 carries N-linked (GlcNAc...) asparagine; by host glycosylation. Positions 165–229 (DKFQYTGAMT…QSGDYSLVIV (65 aa)) are interaction with gL. Cys-278 and Cys-335 are oxidised to a cystine. An N-linked (GlcNAc...) asparagine; by host glycan is attached at Asn-435. Cystine bridges form between Cys-454–Cys-478 and Cys-534–Cys-587. N-linked (GlcNAc...) asparagine; by host glycans are attached at residues Asn-549 and Asn-604. A disulfide bond links Cys-612 and Cys-615. Asn-664 carries an N-linked (GlcNAc...) asparagine; by host glycan. The chain crosses the membrane as a helical span at residues 683–703 (AIILYFIAFALGIFLVHKIVM). The Intravirion segment spans residues 704–706 (FFL).

Belongs to the herpesviridae glycoprotein H family. In terms of assembly, interacts with glycoprotein L (gL); this interaction is necessary for the correct processing and cell surface expression of gH. The heterodimer gH/gL seems to interact with gB trimers during fusion. The heterodimer gH/gL interacts with host EPHA2 to facilitate virus internalization and fusion. Interacts with glycoprotein 42/BZLF2. N-glycosylated, O-glycosylated, and sialylated.

It is found in the virion membrane. Its subcellular location is the host cell membrane. It localises to the host endosome membrane. In terms of biological role, the heterodimer glycoprotein H-glycoprotein L is required for the fusion of viral and plasma membranes leading to virus entry into the host cell. Following initial binding to host receptor, membrane fusion is mediated by the fusion machinery composed of gB and the heterodimer gH/gL. May also be involved in the fusion between the virion envelope and the outer nuclear membrane during virion morphogenesis. The heterodimer gH/gL targets also host EPHA2 to promote viral entry. The protein is Envelope glycoprotein H of Homo sapiens (Human).